A 196-amino-acid chain; its full sequence is Probable GTP-binding protein EngB (196 aa).

The EngB-type G domain occupies 24–196 (ELSEVALSGR…IWNLIEPYIS (173 aa)). Residues 32-39 (GRSNVGKS), 59-63 (GKTQT), 77-80 (DVPG), 144-147 (TKED), and 176-178 (YSS) each bind GTP. Mg(2+)-binding residues include S39 and T61.

The protein belongs to the TRAFAC class TrmE-Era-EngA-EngB-Septin-like GTPase superfamily. EngB GTPase family. It depends on Mg(2+) as a cofactor.

Necessary for normal cell division and for the maintenance of normal septation. The chain is Probable GTP-binding protein EngB from Staphylococcus aureus (strain MW2).